The sequence spans 194 residues: Extracellular globin-E1 (194 aa).

Globin domains are found at residues 1–45 and 55–194; these read DISH…MGLS and GLSG…LRQA. H150 provides a ligand contact to heme b.

It belongs to the globin family. Artemia hemoglobin is a dimer of two similar sized subunits. Each subunit represents a globin chain which exists in two forms (alpha and beta), thus making possible three different phenotypes (HB1, alpha(2), HB2, alpha/beta, HB3, beta(2)). The globin chain is a polymer of eight heme-binding covalently linked domains.

In Artemia sp. (Brine shrimp), this protein is Extracellular globin-E1.